The following is a 353-amino-acid chain: Mitochondrial glutathione transporter SLC25A40 (353 aa).

Solcar repeat units follow at residues 14 to 132 (ITPF…LFAL), 140 to 224 (RSDL…GKWW), and 234 to 328 (PTVA…GKAF). 6 helical membrane passes run 20–40 (MMAS…LDVV), 104–124 (LWSG…IYFT), 143–163 (LAPL…ISPL), 200–221 (WGPT…YEKG), 237–257 (AITF…TLPF), and 299–319 (GLFA…AIMI).

The protein belongs to the mitochondrial carrier (TC 2.A.29) family.

Its subcellular location is the mitochondrion inner membrane. It catalyses the reaction glutathione(in) = glutathione(out). Its function is as follows. Probable mitochondrial transporter required for glutathione import into mitochondria. Glutathione, which plays key roles in oxidative metabolism, is produced exclusively in the cytosol and is imported in many organelles. Mitochondrial glutathione is required for the activity and stability of proteins containing iron-sulfur clusters. This is Mitochondrial glutathione transporter SLC25A40 from Danio rerio (Zebrafish).